A 351-amino-acid polypeptide reads, in one-letter code: MKLSQFKFKLPEDKIALHPAKYRDESRLMVVHKSTGKIEHKVFKDILDYFDDKDVFIFNDTKVFPARLYGNKEKTGARIEVFLLRELNEELRLWDVLVDPARKIRIGNKLYFGDDDSMVAEVIDNTTSRGRTLRFLYDGSHDEFKKALYALGEAPLPSFIRRPVEEEDAERFQTIFAKNEGAVTAPTAGLHFSRELMKRMEIKGIDFAFVTMHAGLGNFREIDVEDLTKHKMDSEQMYVNADACRIVNNAKDEGKNICAVGTTVMRTIETAVGTDGHLKEFDGWTNKFIFPPYDFSVANSMVTNFHLPLSTLLMLVAAYGGYDLVMEAYHTALKEDYRFGTYGDAMLILDK.

This sequence belongs to the QueA family. Monomer.

The protein resides in the cytoplasm. The enzyme catalyses 7-aminomethyl-7-carbaguanosine(34) in tRNA + S-adenosyl-L-methionine = epoxyqueuosine(34) in tRNA + adenine + L-methionine + 2 H(+). The protein operates within tRNA modification; tRNA-queuosine biosynthesis. Functionally, transfers and isomerizes the ribose moiety from AdoMet to the 7-aminomethyl group of 7-deazaguanine (preQ1-tRNA) to give epoxyqueuosine (oQ-tRNA). This Phocaeicola vulgatus (strain ATCC 8482 / DSM 1447 / JCM 5826 / CCUG 4940 / NBRC 14291 / NCTC 11154) (Bacteroides vulgatus) protein is S-adenosylmethionine:tRNA ribosyltransferase-isomerase.